The sequence spans 184 residues: Probable RNA 2'-phosphotransferase (184 aa).

The protein belongs to the KptA/TPT1 family.

Functionally, removes the 2'-phosphate from RNA via an intermediate in which the phosphate is ADP-ribosylated by NAD followed by a presumed transesterification to release the RNA and generate ADP-ribose 1''-2''-cyclic phosphate (APPR&gt;P). May function as an ADP-ribosylase. This Escherichia coli O8 (strain IAI1) protein is Probable RNA 2'-phosphotransferase.